We begin with the raw amino-acid sequence, 103 residues long: Small ribosomal subunit protein uS10 (103 aa).

This sequence belongs to the universal ribosomal protein uS10 family. As to quaternary structure, part of the 30S ribosomal subunit.

In terms of biological role, involved in the binding of tRNA to the ribosomes. This Cutibacterium acnes (strain DSM 16379 / KPA171202) (Propionibacterium acnes) protein is Small ribosomal subunit protein uS10.